Here is a 292-residue protein sequence, read N- to C-terminus: Rab effector Noc2 (292 aa).

One can recognise a RabBD domain in the interval 41-158; it reads QRKSQSLSPA…KRSGAWFYKG (118 aa). Residues 89–146 form an FYVE-type zinc finger; the sequence is GNGLSQCLLCGEVLGFLGSSSVFCKDCRKKVCTKCGIEASPSQKRPLWLCKICSEQRE. Cys-95, Cys-98, Cys-112, Cys-115, Cys-120, Cys-123, Cys-138, and Cys-141 together coordinate Zn(2+). The interval 175 to 292 is disordered; that stretch reads PSFRPLPVEP…RTLAGPRGPR (118 aa). A compositionally biased stretch (basic and acidic residues) spans 221-235; sequence LDDRLRPAGVRDPKG. Phosphoserine is present on Ser-248. Positions 257 to 269 are enriched in low complexity; that stretch reads ASCLSGSQSSLAS.

As to quaternary structure, recruited to dense-core vesicles through specific interaction with RAB27A in endocrine cells. Interacts with RAB3A, RAB3B, RAB3C and RAB3D. Interacts with ZYX.

Its subcellular location is the cytoplasm. The protein resides in the cytoplasmic vesicle. The protein localises to the secretory vesicle membrane. Functionally, rab GTPase effector involved in the late steps of regulated exocytosis, both in endocrine and exocrine cells. The protein is Rab effector Noc2 (RPH3AL) of Bos taurus (Bovine).